A 106-amino-acid chain; its full sequence is Urease subunit beta (106 aa).

This sequence belongs to the urease beta subunit family. Heterotrimer of UreA (gamma), UreB (beta) and UreC (alpha) subunits. Three heterotrimers associate to form the active enzyme.

The protein resides in the cytoplasm. It carries out the reaction urea + 2 H2O + H(+) = hydrogencarbonate + 2 NH4(+). It functions in the pathway nitrogen metabolism; urea degradation; CO(2) and NH(3) from urea (urease route): step 1/1. In Prochlorococcus marinus (strain AS9601), this protein is Urease subunit beta.